The sequence spans 169 residues: S-ribosylhomocysteine lyase (169 aa).

3 residues coordinate Fe cation: His54, His58, and Cys128.

It belongs to the LuxS family. In terms of assembly, homodimer. Fe cation serves as cofactor.

It catalyses the reaction S-(5-deoxy-D-ribos-5-yl)-L-homocysteine = (S)-4,5-dihydroxypentane-2,3-dione + L-homocysteine. Functionally, involved in the synthesis of autoinducer 2 (AI-2) which is secreted by bacteria and is used to communicate both the cell density and the metabolic potential of the environment. The regulation of gene expression in response to changes in cell density is called quorum sensing. Catalyzes the transformation of S-ribosylhomocysteine (RHC) to homocysteine (HC) and 4,5-dihydroxy-2,3-pentadione (DPD). The sequence is that of S-ribosylhomocysteine lyase from Shewanella putrefaciens (strain CN-32 / ATCC BAA-453).